The chain runs to 593 residues: MSASQGNVFTRGLSRISRRKKKTKSIQNSLVSEQQPSFDAAIVPMPIPNDKSSIFSKGMDRLRRSLRLPKKRRDRSHDRHLSPDVTGGSKTEQWQPDEGAVRTGTCCFNVKYLGSVEVYESRGMQVCEGALKSLKASRRKPVKAVLYVSGDGLRVVDQGNSRGLLVDQTIEKVSFCAPDRQTDKGFAYICRDGASRRWMCHGFLATKETGERLSHAVGCAFSICLEKKKRRDEETAQVNVQSAQESTSSTPPKDIFHPNWEDNTSEGTSTQNPSNSRSNLAYQSFRKHVSIEDRYLDPQSVIINEVPASNHMDEIRRISKPRPTGNPALFLRQGSLRAPPDMPSSSDQFKRNMSLRTVSNNPTERSPEKKSFGTQLYNEPIYEGDEDPLGLGITPPVVTKTSGSLSNNGLDGINLNWKSIPAPVHQMQQHNANGDFVAAWPQNTIEKPTVGPLDKLQKQFEDIKLISISSGENTPTTRSKADEWLDDVLRVSMSMSPTSPSSDPPSTSSYSVLPKSGPPPAHAPPPLPVRQAVSNGSPSIYQQQLQQANSTRNSPAGINWNSSPNPMKISQPPAKPVDPFDVQWSRLAVNNTH.

Disordered stretches follow at residues 1 to 97 (MSAS…WQPD), 235 to 278 (TAQV…NSRS), 331 to 375 (LRQG…FGTQ), and 493 to 581 (MSMS…DPFD). Ser17 is subject to Phosphoserine; by PKC. A compositionally biased stretch (polar residues) spans 27–37 (QNSLVSEQQPS). The segment covering 64–74 (RSLRLPKKRRD) has biased composition (basic residues). Ser65 carries the post-translational modification Phosphoserine; by PKC. Positions 102–255 (RTGTCCFNVK…STSSTPPKDI (154 aa)) constitute a PID domain. Polar residues-rich tracts occupy residues 236–251 (AQVN…SSTP), 261–278 (EDNT…NSRS), and 354–364 (SLRTVSNNPTE). The span at 493 to 511 (MSMSPTSPSSDPPSTSSYS) shows a compositional bias: low complexity. Over residues 516-528 (SGPPPAHAPPPLP) the composition is skewed to pro residues. Positions 532 to 565 (AVSNGSPSIYQQQLQQANSTRNSPAGINWNSSPN) are enriched in polar residues.

Interacts with pkc-3. As to expression, expressed in cells comprising the intestine, pharyngeal cells, the anal sphincter and depressor muscles.

The protein localises to the cytoplasm. The protein resides in the cell cortex. It localises to the cytoskeleton. Its subcellular location is the membrane. In terms of biological role, involved in the tethering and targeting of pkc-3 to modulate the intracellular distribution of the kinase. The complex formed with pkc-3 complexes are likely to be involved in assembly, maintenance, and/or regulation of protein complexes that execute asymmetric and/or polarized cell functions. In Caenorhabditis elegans, this protein is Numb-related protein 1.